The primary structure comprises 496 residues: Aspartyl/glutamyl-tRNA(Asn/Gln) amidotransferase subunit B (496 aa).

The protein belongs to the GatB/GatE family. GatB subfamily. Heterotrimer of A, B and C subunits.

It carries out the reaction L-glutamyl-tRNA(Gln) + L-glutamine + ATP + H2O = L-glutaminyl-tRNA(Gln) + L-glutamate + ADP + phosphate + H(+). It catalyses the reaction L-aspartyl-tRNA(Asn) + L-glutamine + ATP + H2O = L-asparaginyl-tRNA(Asn) + L-glutamate + ADP + phosphate + 2 H(+). Functionally, allows the formation of correctly charged Asn-tRNA(Asn) or Gln-tRNA(Gln) through the transamidation of misacylated Asp-tRNA(Asn) or Glu-tRNA(Gln) in organisms which lack either or both of asparaginyl-tRNA or glutaminyl-tRNA synthetases. The reaction takes place in the presence of glutamine and ATP through an activated phospho-Asp-tRNA(Asn) or phospho-Glu-tRNA(Gln). The protein is Aspartyl/glutamyl-tRNA(Asn/Gln) amidotransferase subunit B of Natronomonas pharaonis (strain ATCC 35678 / DSM 2160 / CIP 103997 / JCM 8858 / NBRC 14720 / NCIMB 2260 / Gabara) (Halobacterium pharaonis).